Reading from the N-terminus, the 342-residue chain is MSKAYQQAGVDINAGYEAVERMTSHVQRTMRKEVLGGLGGFGATFDLSQLNMKAPLLVSGTDGVGTKLKLAIDNDKHDTIGIDAVAMCVNDILTTGAEPLYFLDYIATNKVVPEVIEQIVKGVSDGCEETNTALIGGETAEMGEMYHEGEYDLAGFAVGAVEKDDYIDGSSVEPGQAIIGLESSGIHSNGYSLVRKLIQQSGIKLSEPFNQEQTFLDAFLKPTRLYVKPVLAVKSSIKIYAMTHITGGGFYENIPRALPEGITAKIDVTQFPTPAIFDWLQEQGNISTDEMYNIFNMGIGFTLVVDNNQVESTLEILNGQNIKAYKIGETVKGNEPIQLTGV.

The protein belongs to the AIR synthase family.

The protein resides in the cytoplasm. The catalysed reaction is 2-formamido-N(1)-(5-O-phospho-beta-D-ribosyl)acetamidine + ATP = 5-amino-1-(5-phospho-beta-D-ribosyl)imidazole + ADP + phosphate + H(+). It participates in purine metabolism; IMP biosynthesis via de novo pathway; 5-amino-1-(5-phospho-D-ribosyl)imidazole from N(2)-formyl-N(1)-(5-phospho-D-ribosyl)glycinamide: step 2/2. In Staphylococcus saprophyticus subsp. saprophyticus (strain ATCC 15305 / DSM 20229 / NCIMB 8711 / NCTC 7292 / S-41), this protein is Phosphoribosylformylglycinamidine cyclo-ligase.